The following is a 359-amino-acid chain: Maleylacetate reductase 2 (359 aa).

The protein belongs to the iron-containing alcohol dehydrogenase family. Homodimer.

The catalysed reaction is 3-oxoadipate + NAD(+) = maleylacetate + NADH + H(+). The enzyme catalyses 3-oxoadipate + NADP(+) = maleylacetate + NADPH + H(+). The protein operates within aromatic compound metabolism; 3-chlorocatechol degradation. Inhibited by p-chloromercuribenzoate and by 3-oxoadipate, and, in a temperature-dependent manner, by manganese. Its function is as follows. Plays a major role in the degradation of chloroaromatic compounds by channeling maleylacetate and some of its substituted derivatives into the 3-oxoadipate pathway. This enzyme converts maleylacetate and 2-chloromaleylacetate with similar efficiencies. NADH is preferred to NADPH as the cosubstrate. This chain is Maleylacetate reductase 2 (tfdFII), found in Cupriavidus pinatubonensis (strain JMP 134 / LMG 1197) (Cupriavidus necator (strain JMP 134)).